A 165-amino-acid chain; its full sequence is Small ribosomal subunit protein uS5 (165 aa).

One can recognise an S5 DRBM domain in the interval Leu-10–Val-73.

It belongs to the universal ribosomal protein uS5 family. As to quaternary structure, part of the 30S ribosomal subunit. Contacts proteins S4 and S8.

Functionally, with S4 and S12 plays an important role in translational accuracy. Located at the back of the 30S subunit body where it stabilizes the conformation of the head with respect to the body. This Acinetobacter baylyi (strain ATCC 33305 / BD413 / ADP1) protein is Small ribosomal subunit protein uS5.